Reading from the N-terminus, the 405-residue chain is Pre-mRNA-splicing factor cwc-24 (405 aa).

Disordered stretches follow at residues 1 to 114 (MADT…NTIY) and 162 to 184 (TKKK…DGTY). Over residues 15–29 (EPTTATPTAPIAPVA) the composition is skewed to low complexity. Positions 31–46 (FKKRGAKGKANLRKRP) are enriched in basic residues. Acidic residues predominate over residues 56–70 (SDDDSSDFESSEDEA). Residues 74 to 83 (RIKRRKKNHH) show a composition bias toward basic residues. The C3H1-type zinc-finger motif lies at 221–249 (DMAPDVCKDYKQTGFCGFGDNCKFLHARE). An RING-type zinc finger spans residues 310–349 (CIICRGPYSNSPVVTRCGHYFCEACALKRYRKDPSCAACG). Residues 370–386 (KARAERLRREARERGEE) are compositionally biased toward basic and acidic residues. The tract at residues 370 to 405 (KARAERLRREARERGEEVSEEEDEGEDEGEGAEGSD) is disordered. Residues 387–405 (VSEEEDEGEDEGEGAEGSD) show a composition bias toward acidic residues.

It belongs to the CWC24 family. As to quaternary structure, associated with the spliceosome.

The protein resides in the nucleus. In terms of biological role, involved in pre-mRNA splicing. The protein is Pre-mRNA-splicing factor cwc-24 (cwc-24) of Neurospora crassa (strain ATCC 24698 / 74-OR23-1A / CBS 708.71 / DSM 1257 / FGSC 987).